The primary structure comprises 932 residues: Myelin gene regulatory factor-like A (932 aa).

Composition is skewed to low complexity over residues 1 to 19 and 33 to 48; these read MDGY…QQHQ and QQQQ…QQQQ. 7 disordered regions span residues 1-63, 152-256, 269-328, 540-568, 582-601, 613-660, and 680-726; these read MDGY…ISNG, VNSP…LSSS, TNTQ…NENP, VTPP…SNNM, TMNI…LSQL, TQNH…NNNN, and NINN…CHWN. Positions 49–59 are enriched in polar residues; sequence PMNGSNNQLLG. Residues 127 to 154 are a coiled coil; it reads LDSSFLMLQQQLQDQQQQIAQFNSSVNS. Composition is skewed to low complexity over residues 152–249 and 277–294; these read VNSP…ANNT and PRSI…TNSP. Positions 286-546 form a DNA-binding region, NDT80; sequence PNLSPTNSPI…ATQVTPPGDL (261 aa). Positions 311–328 are enriched in polar residues; sequence ENENSDPPSPMTQYNENP. 2 stretches are compositionally biased toward low complexity: residues 615-660 and 680-721; these read NHNN…NNNN and NINN…NNNN. A Peptidase S74 domain is found at 767–877; the sequence is SDLRIKYDLK…KQMDEMKLKL (111 aa). Residues 863 to 895 adopt a coiled-coil conformation; that stretch reads TQELSKQMDEMKLKLITYESKLKNLKKKSKNQT. The chain crosses the membrane as a helical span at residues 895-915; it reads TILLIIFMITFLLVALYMYKP.

It localises to the membrane. Functionally, transcription factor which acts as a key regulator of pstA (prestalk-A) cells differentiation. Essential for ecmA-specific gene expression. The polypeptide is Myelin gene regulatory factor-like A (mrfA) (Dictyostelium discoideum (Social amoeba)).